Reading from the N-terminus, the 129-residue chain is UPF0325 protein Spro_3794 (129 aa).

The protein belongs to the UPF0325 family.

The protein is UPF0325 protein Spro_3794 of Serratia proteamaculans (strain 568).